The following is a 206-amino-acid chain: Large ribosomal subunit protein mL40 (206 aa).

Residues 1-46 (MATAAMLCAARALRPRSWIPGTCQAQVRHTHQRASLLSFWELIPMR) constitute a mitochondrion transit peptide. Residues 170–190 (PFEKEGPHYTPPVPNYQAPEG) form a disordered region.

The protein belongs to the mitochondrion-specific ribosomal protein mL40 family. In terms of assembly, component of the mitochondrial ribosome large subunit (39S) which comprises a 16S rRNA and about 50 distinct proteins.

It localises to the mitochondrion. The polypeptide is Large ribosomal subunit protein mL40 (Mrpl40) (Rattus norvegicus (Rat)).